The chain runs to 335 residues: POU domain, class 5, transcription factor 2 (335 aa).

Positions 1-23 (MAGRRSSNVCPFPGNSGGGLEGP) are disordered. Positions 113–187 (DVSAIQKEME…LLKMWLEEVD (75 aa)) constitute a POU-specific domain. The homeobox DNA-binding region spans 205–264 (RKRRRASRERRIGSNLEKLFLQCPEPTPQQISYIAGRLRLQKDLVQVWFSNRSQMAGWPT).

Belongs to the POU transcription factor family. Class-5 subfamily. Highly restricted to adult testis.

The protein resides in the nucleus. Functionally, transcription factor that binds preferentially to the octamer motif (5'-ATGTTAAT-3'). May exert a regulatory function in meiotic events that are required for terminal differentiation of male germ cell. This is POU domain, class 5, transcription factor 2 (Pou5f2) from Rattus norvegicus (Rat).